Here is a 795-residue protein sequence, read N- to C-terminus: Phenylalanine--tRNA ligase beta subunit (795 aa).

One can recognise a tRNA-binding domain in the interval 39 to 148 (AGVFDGVKVG…ENAPIGMDFR (110 aa)). Residues 401–476 (PKPNQVALRR…RIYGYNNIPN (76 aa)) enclose the B5 domain. 4 residues coordinate Mg(2+): aspartate 454, aspartate 460, glutamate 463, and glutamate 464. Residues 701–794 (SKFPANRRDI…VSAQFGAALR (94 aa)) form the FDX-ACB domain.

The protein belongs to the phenylalanyl-tRNA synthetase beta subunit family. Type 1 subfamily. In terms of assembly, tetramer of two alpha and two beta subunits. It depends on Mg(2+) as a cofactor.

It localises to the cytoplasm. The enzyme catalyses tRNA(Phe) + L-phenylalanine + ATP = L-phenylalanyl-tRNA(Phe) + AMP + diphosphate + H(+). This is Phenylalanine--tRNA ligase beta subunit (pheT) from Vibrio cholerae serotype O1 (strain ATCC 39315 / El Tor Inaba N16961).